The chain runs to 123 residues: Large-conductance mechanosensitive channel (123 aa).

Helical transmembrane passes span Val-14 to Leu-34 and Gly-67 to Val-87.

The protein belongs to the MscL family. As to quaternary structure, homopentamer.

The protein resides in the cell membrane. Channel that opens in response to stretch forces in the membrane lipid bilayer. May participate in the regulation of osmotic pressure changes within the cell. This Lacticaseibacillus casei (strain BL23) (Lactobacillus casei) protein is Large-conductance mechanosensitive channel.